The sequence spans 108 residues: Iron-sulfur cluster assembly protein CyaY (108 aa).

This sequence belongs to the frataxin family.

In terms of biological role, involved in iron-sulfur (Fe-S) cluster assembly. May act as a regulator of Fe-S biogenesis. In Pseudoalteromonas atlantica (strain T6c / ATCC BAA-1087), this protein is Iron-sulfur cluster assembly protein CyaY.